We begin with the raw amino-acid sequence, 806 residues long: Leucine--tRNA ligase (806 aa).

Residues 54 to 64 (SYPSGDLHMGH) carry the 'HIGH' region motif. The short motif at 571 to 575 (KMSKS) is the 'KMSKS' region element. Position 574 (lysine 574) interacts with ATP.

This sequence belongs to the class-I aminoacyl-tRNA synthetase family.

The protein resides in the cytoplasm. The catalysed reaction is tRNA(Leu) + L-leucine + ATP = L-leucyl-tRNA(Leu) + AMP + diphosphate. This is Leucine--tRNA ligase from Tropheryma whipplei (strain Twist) (Whipple's bacillus).